We begin with the raw amino-acid sequence, 79 residues long: Large ribosomal subunit protein bL31 (79 aa).

This sequence belongs to the bacterial ribosomal protein bL31 family. Type A subfamily. As to quaternary structure, part of the 50S ribosomal subunit.

Its function is as follows. Binds the 23S rRNA. The polypeptide is Large ribosomal subunit protein bL31 (Trichormus variabilis (strain ATCC 29413 / PCC 7937) (Anabaena variabilis)).